The sequence spans 419 residues: Effector protein BipC (419 aa).

2 disordered regions span residues 62-94 (VAGS…GLER) and 338-402 (LQSG…AKSQ). 2 stretches are compositionally biased toward basic and acidic residues: residues 71–94 (ELAR…GLER) and 380–392 (TRDE…REAA).

It belongs to the SctB/SipC family.

It localises to the secreted. The protein is Effector protein BipC (bipC) of Burkholderia pseudomallei (strain 1710b).